Here is an 890-residue protein sequence, read N- to C-terminus: Inter-alpha-trypsin inhibitor heavy chain H3 (890 aa).

Residues 1 to 20 (MAFAWWPCLILALLSSLAAS) form the signal peptide. Positions 21–34 (GFPRSPFRLLGKRS) are excised as a propeptide. The region spanning 29-158 (LLGKRSLPEG…KVTFELTYEE (130 aa)) is the VIT domain. The N-linked (GlcNAc...) asparagine glycan is linked to asparagine 91. In terms of domain architecture, VWFA spans 284-467 (NVAFVIDISG…LQLQGFYEEV (184 aa)). Asparagine 580 carries N-linked (GlcNAc...) asparagine glycosylation. Aspartate 1-(chondroitin 4-sulfate)-ester is present on aspartate 651. The propeptide occupies 652-890 (PHFIIQIPEK…HTDYIVPNLF (239 aa)).

Belongs to the ITIH family. In terms of assembly, I-alpha-I plasma protease inhibitors are assembled from one or two heavy chains (HC) and one light chain, bikunin. Pre-alpha-inhibitor (P-alpha-I) is composed of ITIH3/HC3 and bikunin. Heavy chains are linked to bikunin via chondroitin 4-sulfate esterified to the alpha-carboxyl of the C-terminal aspartate after propeptide cleavage.

The protein resides in the secreted. May act as a carrier of hyaluronan in serum or as a binding protein between hyaluronan and other matrix protein, including those on cell surfaces in tissues to regulate the localization, synthesis and degradation of hyaluronan which are essential to cells undergoing biological processes. This Homo sapiens (Human) protein is Inter-alpha-trypsin inhibitor heavy chain H3 (ITIH3).